Here is a 98-residue protein sequence, read N- to C-terminus: NADH-ubiquinone oxidoreductase chain 4L (98 aa).

A run of 3 helical transmembrane segments spans residues 1–21 (MMSI…GVLI), 28–48 (STLL…ALII), and 59–79 (APLI…ALLV).

This sequence belongs to the complex I subunit 4L family. In terms of assembly, core subunit of respiratory chain NADH dehydrogenase (Complex I) which is composed of 45 different subunits.

Its subcellular location is the mitochondrion inner membrane. The enzyme catalyses a ubiquinone + NADH + 5 H(+)(in) = a ubiquinol + NAD(+) + 4 H(+)(out). Functionally, core subunit of the mitochondrial membrane respiratory chain NADH dehydrogenase (Complex I) which catalyzes electron transfer from NADH through the respiratory chain, using ubiquinone as an electron acceptor. Part of the enzyme membrane arm which is embedded in the lipid bilayer and involved in proton translocation. The polypeptide is NADH-ubiquinone oxidoreductase chain 4L (MT-ND4L) (Lagostrophus fasciatus (Banded hare-wallaby)).